A 700-amino-acid polypeptide reads, in one-letter code: Elongation factor G (700 aa).

Positions 8–290 (ERYRNIGISA…AVIDYLPSPV (283 aa)) constitute a tr-type G domain. GTP-binding positions include 17–24 (AHIDAGKT), 88–92 (DTPGH), and 142–145 (NKMD).

Belongs to the TRAFAC class translation factor GTPase superfamily. Classic translation factor GTPase family. EF-G/EF-2 subfamily.

Its subcellular location is the cytoplasm. Catalyzes the GTP-dependent ribosomal translocation step during translation elongation. During this step, the ribosome changes from the pre-translocational (PRE) to the post-translocational (POST) state as the newly formed A-site-bound peptidyl-tRNA and P-site-bound deacylated tRNA move to the P and E sites, respectively. Catalyzes the coordinated movement of the two tRNA molecules, the mRNA and conformational changes in the ribosome. This Paracidovorax citrulli (strain AAC00-1) (Acidovorax citrulli) protein is Elongation factor G.